The primary structure comprises 426 residues: Gamma-glutamyl phosphate reductase (426 aa).

The protein belongs to the gamma-glutamyl phosphate reductase family.

It localises to the cytoplasm. The catalysed reaction is L-glutamate 5-semialdehyde + phosphate + NADP(+) = L-glutamyl 5-phosphate + NADPH + H(+). It functions in the pathway amino-acid biosynthesis; L-proline biosynthesis; L-glutamate 5-semialdehyde from L-glutamate: step 2/2. In terms of biological role, catalyzes the NADPH-dependent reduction of L-glutamate 5-phosphate into L-glutamate 5-semialdehyde and phosphate. The product spontaneously undergoes cyclization to form 1-pyrroline-5-carboxylate. This is Gamma-glutamyl phosphate reductase from Delftia acidovorans (strain DSM 14801 / SPH-1).